Reading from the N-terminus, the 183-residue chain is Ribosome-recycling factor (183 aa).

This sequence belongs to the RRF family.

The protein resides in the cytoplasm. In terms of biological role, responsible for the release of ribosomes from messenger RNA at the termination of protein biosynthesis. May increase the efficiency of translation by recycling ribosomes from one round of translation to another. The protein is Ribosome-recycling factor of Afipia carboxidovorans (strain ATCC 49405 / DSM 1227 / KCTC 32145 / OM5) (Oligotropha carboxidovorans).